The following is a 1387-amino-acid chain: Magnesium-chelatase subunit ChlH, chloroplastic (1387 aa).

Residues 1–50 (MSSLVSTPFTTATGVQKKLGAPVPLHSFLLSRRQPAAGAGRGRAAAAAIR) constitute a chloroplast transit peptide.

This sequence belongs to the Mg-chelatase subunit H family. The magnesium chelatase complex is a heterotrimer consisting of subunits CHLI, CHLD and CHLH.

Its subcellular location is the plastid. It is found in the chloroplast stroma. The protein resides in the chloroplast membrane. The enzyme catalyses protoporphyrin IX + Mg(2+) + ATP + H2O = Mg-protoporphyrin IX + ADP + phosphate + 3 H(+). Its pathway is porphyrin-containing compound metabolism; chlorophyll biosynthesis. In terms of biological role, involved in chlorophyll biosynthesis. Catalyzes the insertion of magnesium ion into protoporphyrin IX to yield Mg-protoporphyrin IX. The reaction takes place in two steps, with an ATP-dependent activation followed by an ATP-dependent chelation step. May be involved in the plastid-to-nucleus retrograde signaling. In Oryza sativa subsp. japonica (Rice), this protein is Magnesium-chelatase subunit ChlH, chloroplastic (CHLH).